Reading from the N-terminus, the 88-residue chain is Large ribosomal subunit protein bL31B (88 aa).

The protein belongs to the bacterial ribosomal protein bL31 family. Type B subfamily. Part of the 50S ribosomal subunit.

The sequence is that of Large ribosomal subunit protein bL31B from Herminiimonas arsenicoxydans.